We begin with the raw amino-acid sequence, 245 residues long: Carboxymethylenebutenolidase homolog (245 aa).

N-acetylalanine is present on alanine 2. Lysine 36 is modified (N6-acetyllysine). Residues cysteine 132, aspartate 179, and histidine 212 contribute to the active site. At serine 223 the chain carries Phosphoserine.

The protein belongs to the dienelactone hydrolase family.

The protein resides in the cytoplasm. It is found in the cytosol. Its function is as follows. Cysteine hydrolase. This Pongo abelii (Sumatran orangutan) protein is Carboxymethylenebutenolidase homolog (CMBL).